The sequence spans 394 residues: MKILVLNSGSSSIKFKLFEKDEALASGLVEKIGEQNSKIELKDLKSGQKYKKELAIKDHEQGIELVNELFAQSGILHDLNELDGCGHRIVHGGPNLTKHCLVDDEILKEIDRVAHIAPLHNPAHLIGIKTMIKAAPKVPNVTVFDTAFHQSMPDYAYMYALPYEFYEKHQVRKYGFHGTSHSYVSKQAAYILGKNINEFNAISAHLGNGASVCAIENGKCVDTSMGFTPLEGLIMGTRCGDIDPAVLPFLAKELNLNPSDLDTMMNKKSGVYGICGFNDFRDIEAQIEQNNEKARLALDMFCYRLSKYIGSYFAILPRVDALIFTAGIGENDDIVRAKVCQRLAHLGFDIDLDKNAQLRNGEISKKDSKIKILIVPTEEELEIAKITTELIKNK.

Residue Asn-7 coordinates Mg(2+). Lys-14 provides a ligand contact to ATP. Arg-88 lines the substrate pocket. The active-site Proton donor/acceptor is Asp-145. Residues 205–209 (HLGNG), 279–281 (DFR), and 327–331 (GIGEN) each bind ATP. Glu-379 provides a ligand contact to Mg(2+).

It belongs to the acetokinase family. Homodimer. Mg(2+) is required as a cofactor. Requires Mn(2+) as cofactor.

It localises to the cytoplasm. It carries out the reaction acetate + ATP = acetyl phosphate + ADP. It functions in the pathway metabolic intermediate biosynthesis; acetyl-CoA biosynthesis; acetyl-CoA from acetate: step 1/2. Catalyzes the formation of acetyl phosphate from acetate and ATP. Can also catalyze the reverse reaction. The chain is Acetate kinase from Campylobacter lari (strain RM2100 / D67 / ATCC BAA-1060).